Reading from the N-terminus, the 541-residue chain is Arginine--tRNA ligase (541 aa).

The 'HIGH' region motif lies at 119–129; it reads ANPTGPLHIGH.

This sequence belongs to the class-I aminoacyl-tRNA synthetase family. In terms of assembly, monomer.

The protein localises to the cytoplasm. It catalyses the reaction tRNA(Arg) + L-arginine + ATP = L-arginyl-tRNA(Arg) + AMP + diphosphate. The chain is Arginine--tRNA ligase from Helicobacter acinonychis (strain Sheeba).